The chain runs to 406 residues: Cysteine desulfurase (406 aa).

Lysine 226 is modified (N6-(pyridoxal phosphate)lysine). Cysteine 364 (cysteine persulfide intermediate) is an active-site residue.

This sequence belongs to the class-V pyridoxal-phosphate-dependent aminotransferase family. Csd subfamily. Homodimer. Interacts with SufE and the SufBCD complex composed of SufB, SufC and SufD. The interaction with SufE is required to mediate the direct transfer of the sulfur atom from the S-sulfanylcysteine. Pyridoxal 5'-phosphate is required as a cofactor.

The protein localises to the cytoplasm. The catalysed reaction is (sulfur carrier)-H + L-cysteine = (sulfur carrier)-SH + L-alanine. It carries out the reaction L-selenocysteine + AH2 = hydrogenselenide + L-alanine + A + H(+). It functions in the pathway cofactor biosynthesis; iron-sulfur cluster biosynthesis. Functionally, cysteine desulfurases mobilize the sulfur from L-cysteine to yield L-alanine, an essential step in sulfur metabolism for biosynthesis of a variety of sulfur-containing biomolecules. Component of the suf operon, which is activated and required under specific conditions such as oxidative stress and iron limitation. Acts as a potent selenocysteine lyase in vitro, that mobilizes selenium from L-selenocysteine. Selenocysteine lyase activity is however unsure in vivo. The sequence is that of Cysteine desulfurase from Yersinia pestis bv. Antiqua (strain Angola).